A 206-amino-acid chain; its full sequence is Guanylate kinase (206 aa).

One can recognise a Guanylate kinase-like domain in the interval Gly6 to Arg184. Ala13–Ser20 serves as a coordination point for ATP.

It belongs to the guanylate kinase family.

The protein resides in the cytoplasm. The catalysed reaction is GMP + ATP = GDP + ADP. In terms of biological role, essential for recycling GMP and indirectly, cGMP. In Pseudomonas fluorescens (strain ATCC BAA-477 / NRRL B-23932 / Pf-5), this protein is Guanylate kinase.